The sequence spans 100 residues: Large ribosomal subunit protein uL23 (100 aa).

The protein belongs to the universal ribosomal protein uL23 family. Part of the 50S ribosomal subunit. Contacts protein L29, and trigger factor when it is bound to the ribosome.

Its function is as follows. One of the early assembly proteins it binds 23S rRNA. One of the proteins that surrounds the polypeptide exit tunnel on the outside of the ribosome. Forms the main docking site for trigger factor binding to the ribosome. The protein is Large ribosomal subunit protein uL23 of Synechococcus sp. (strain WH7803).